The following is a 308-amino-acid chain: Zinc finger CCCH domain-containing protein 15 (308 aa).

The segment at 1 to 21 (MENKIAPFSYSGSSAGNSSSG) is disordered. The span at 9–21 (SYSGSSAGNSSSG) shows a compositional bias: low complexity. The stretch at 56–91 (TRLHEASLEAEALRLENTELRSMNLRLKNELNSLIR) forms a coiled coil. The interval 110–190 (LSIGGNDADE…GTVTKPGTCG (81 aa)) is disordered. At S111 the chain carries Phosphoserine. A compositionally biased stretch (polar residues) spans 148–164 (RSSLPKSISVRSNGYSK). 2 consecutive C3H1-type zinc fingers follow at residues 222-250 (MTKT…HGIK) and 260-288 (RYKT…HSLS).

Phosphorylated at Ser-111 by ASK7/BIN2 in the cytoplasm in the absence of brassinosteroids (BRs). In terms of tissue distribution, highly expressed in secondary cell wall-forming tissues and the xylem cells of roots. Expressed predominantly in inflorescence stems, flowers and siliques. Highly expressed in the basal portion of stems, where cells are undergoing secondary cell wall thickening. Highly expressed in meiocytes and tapetum from anthers.

It is found in the cytoplasm. The protein resides in the nucleus. Functions probably as a transcriptional factor that activates genes involved in secondary cell wall biosynthesis. Functions redudantly with C3H14 to regulate secondary cell wall formation. C3H14 and C3H15 have overlapping roles in the regulation of secondary cell wall formation and anther development. C3H14 may contribute more to secondary cell wall thickening while C3H15 could be more important in anther development. May regulate at both the transcriptional and post-transcriptional levels the expression of many genes involved in various biological processes, particularly those associated with cell wall metabolism and pollen development. Involved in the regulation of callose metabolism in male meiocytes, in integrity of newly formed microspores, and promotes male fertility. May be involved in the regulation of the callose synthesis genes CALS5 and CALS12, the potential degradation of callose walls-related genes A6 and MYB80, as well as other putative beta-1,3-glucanase genes. Negatively regulates cell elongation by inhibiting brassinosteroid (BR) signaling. Functions downstream of the BRI1 receptor as a negative regulator in the BR pathway. The chain is Zinc finger CCCH domain-containing protein 15 from Arabidopsis thaliana (Mouse-ear cress).